A 264-amino-acid polypeptide reads, in one-letter code: Glutamate racemase (264 aa).

Residues 10–11 and 42–43 each bind substrate; these read DS and YG. Residue C73 is the Proton donor/acceptor of the active site. Residue 74-75 coordinates substrate; sequence NT. Residue C183 is the Proton donor/acceptor of the active site. Position 184-185 (184-185) interacts with substrate; sequence TH.

Belongs to the aspartate/glutamate racemases family. In terms of assembly, homodimer.

It catalyses the reaction L-glutamate = D-glutamate. It participates in cell wall biogenesis; peptidoglycan biosynthesis. In terms of biological role, provides the (R)-glutamate required for cell wall biosynthesis. The chain is Glutamate racemase from Streptococcus pyogenes serotype M1.